Consider the following 157-residue polypeptide: Transcription antitermination protein NusB (157 aa).

Belongs to the NusB family.

Involved in transcription antitermination. Required for transcription of ribosomal RNA (rRNA) genes. Binds specifically to the boxA antiterminator sequence of the ribosomal RNA (rrn) operons. In Xylella fastidiosa (strain Temecula1 / ATCC 700964), this protein is Transcription antitermination protein NusB.